The sequence spans 511 residues: Voltage-gated potassium channel KCNC1 (511 aa).

Residues 1 to 190 (MGQGDESERI…EDPYSSRYAR (190 aa)) lie on the Cytoplasmic side of the membrane. Phosphoserine is present on Ser-44. 4 residues coordinate Zn(2+): His-77, Cys-83, Cys-104, and Cys-105. Residues 121 to 147 (SFGGAPLDNSADDADADGPGDSGDGED) are disordered. A phosphoserine mark is found at Ser-130, Ser-142, Ser-158, and Ser-160. The segment covering 130–147 (SADDADADGPGDSGDGED) has biased composition (acidic residues). The chain crosses the membrane as a helical span at residues 191-209 (YVAFASLFFILVSITTFCL). N-linked (GlcNAc...) asparagine glycosylation is found at Asn-220 and Asn-229. Residues 248–267 (IEGVCVVWFTFEFLMRVVFC) form a helical membrane-spanning segment. Topologically, residues 268–276 (PNKVEFIKN) are cytoplasmic. The chain crosses the membrane as a helical span at residues 277-295 (SLNIIDFVAILPFYLEVGL). Residues 309-331 (FLRVVRFVRILRIFKLTRHFVGL) form a helical; Voltage-sensor membrane-spanning segment. Topologically, residues 332–344 (RVLGHTLRASTNE) are cytoplasmic. A helical membrane pass occupies residues 345–366 (FLLLIIFLALGVLIFATMIYYA). The K(+) site is built by Thr-400, Leu-401, Gly-402, and Tyr-403. Residues 400–405 (TLGYGD) carry the Selectivity filter motif. The helical transmembrane segment at 415–436 (LVGALCALAGVLTIAMPVPVIV) threads the bilayer. At 437–511 (NNFGMYYSLA…GRKPLRGMSI (75 aa)) the chain is on the cytoplasmic side. The residue at position 474 (Ser-474) is a Phosphoserine. Position 483 is a phosphothreonine (Thr-483).

The protein belongs to the potassium channel family. C (Shaw) (TC 1.A.1.2) subfamily. Kv3.1/KCNC1 sub-subfamily. As to quaternary structure, homotetramer. Homomultimer. Heteromultimer with KCNG3, KCNG4 and KCNV2. Heteromultimer with KCNC2. Heterotetramer with KCNC3. Interacts with the ancillary subunits KCNE1 and KCNE2; the interaction modulates channel activity. In terms of processing, N-glycosylated; contains sialylated glycans. In terms of tissue distribution, detected in cerebellum. Detected in brain (at protein level). Detected in brain.

It is found in the cell membrane. Its subcellular location is the cell projection. It localises to the axon. The protein resides in the presynaptic cell membrane. It catalyses the reaction K(+)(in) = K(+)(out). Functionally, voltage-gated potassium channel that opens in response to the voltage difference across the membrane and through which potassium ions pass in accordance with their electrochemical gradient. The mechanism is time-dependent and inactivation is slow. Plays an important role in the rapid repolarization of fast-firing brain neurons. Can form functional homotetrameric channels and heterotetrameric channels that contain variable proportions of KCNC2, and possibly other family members as well. Contributes to fire sustained trains of very brief action potentials at high frequency in pallidal neurons. In Mus musculus (Mouse), this protein is Voltage-gated potassium channel KCNC1.